We begin with the raw amino-acid sequence, 472 residues long: Cell division protein FtsP (472 aa).

The tat-type signal signal peptide spans 1-32 (MSLSRRRFIQASGLALCAGGLPLQARASGAQA).

It belongs to the FtsP family. Predicted to be exported by the Tat system. The position of the signal peptide cleavage has not been experimentally proven.

The protein localises to the periplasm. Its function is as follows. Cell division protein that is required for growth during stress conditions. May be involved in protecting or stabilizing the divisomal assembly under conditions of stress. This chain is Cell division protein FtsP, found in Edwardsiella tarda (strain FL6-60).